Reading from the N-terminus, the 308-residue chain is Heme A synthase (308 aa).

Residues 1 to 8 (MFKKRNLK) lie on the Cytoplasmic side of the membrane. Residues 9-29 (WLSILATVIMAWVQLGGALVT) form a helical membrane-spanning segment. Topologically, residues 30–67 (KTGSENGCGASWPLCHGALLPQNLPIATIIELSHRATS) are extracellular. An intrachain disulfide couples Cys-37 to Cys-44. The active site involves Glu-60. His-63 lines the heme o pocket. The chain crosses the membrane as a helical span at residues 68 to 88 (ALSLIVVLWLVITAWKNIGYI). Over 89–93 (KEVKP) the chain is Cytoplasmic. A helical transmembrane segment spans residues 94–114 (LCIISVAFLLIQALVGAAAVL). At 115–123 (WQQNDYVLA) the chain is on the extracellular side. The helical transmembrane segment at 124-144 (LHFGISLISFSSVFVLTLIIF) threads the bilayer. His-125 is a heme o binding site. Residues 145–161 (DVDQKYEANKVHIDRKL) are Cytoplasmic-facing. A helical membrane pass occupies residues 162–182 (RIYTWTMAICLYVGIYTGALV). Residues 183–215 (RHTKSSLAYGSWPLPFNDLIPHTEQDWVQLAHR) are Extracellular-facing. His-214 serves as a coordination point for heme b. Residues 216-236 (TLALIASISVFLAFNYAIKHY) traverse the membrane as a helical segment. At 237 to 244 (QNNRTIRY) the chain is on the cytoplasmic side. A helical membrane pass occupies residues 245 to 265 (GYTAALLLIILQIVTGALSIF). Over 266 to 270 (THVNL) the chain is Extracellular. Residues 271–291 (IIALLHALIITFEFGLIAYLI) traverse the membrane as a helical segment. A heme b-binding site is contributed by His-276. Over 292–308 (VLLLRSQRVEKVKQNAY) the chain is Cytoplasmic.

The protein belongs to the COX15/CtaA family. Type 1 subfamily. In terms of assembly, interacts with CtaB. Heme b is required as a cofactor.

It is found in the cell membrane. It carries out the reaction Fe(II)-heme o + 2 A + H2O = Fe(II)-heme a + 2 AH2. It functions in the pathway porphyrin-containing compound metabolism; heme A biosynthesis; heme A from heme O: step 1/1. Functionally, catalyzes the conversion of heme O to heme A by two successive hydroxylations of the methyl group at C8. The first hydroxylation forms heme I, the second hydroxylation results in an unstable dihydroxymethyl group, which spontaneously dehydrates, resulting in the formyl group of heme A. The chain is Heme A synthase from Staphylococcus carnosus (strain TM300).